The chain runs to 551 residues: MASLKLKKRDNGAEPDKKKLVIAGIRHQLLLLLRRRHRLFPLVSAVSGCLLLILFSFSTLSPPPLIHHNNQVAVEPNPTTPFRVPENGGRSDRQLWSSRLSNLYYACSNATDTFQVTDTRSQTNRYLLIATSGGLNQQRTGIIDAVVAAYILNATLVVPKLDQKSYWKDTSNFEDIFDVDWFISHLSKDVKIIKELPKEEQSRISTSLQSMRVPRKCTPSCYLQRVLPILTKKHVVQLSKFDYRLSNALDTELQKLRCRVNYHAVRYTESINRMGQLLVDRMRKKAKHFVALHLRFEPDMLAFSGCYYGGGQKERLELGAMRRRWKTLHAANPEKVRRHGRCPLTPEEIGLMLRGLGFGKEVHLYVASGEVYGGEDTLAPLRALFPNLHTKETLTSKKELAPFANFSSRMAALDFIVCDKSDAFVTNNNGNMARILAGRRRYLGHKVTIRPNAKKLYEIFKNRHNMTWGEFSSKVRRYQTGFMGEPDEMKPGEGEFHENPASCICRTSEARVKEKAKHVNEDDSSEYSEIGNVPISSRSDLDHSQFDEVIF.

A helical; Signal-anchor for type II membrane protein transmembrane segment spans residues 39–59 (LFPLVSAVSGCLLLILFSFST). 2 N-linked (GlcNAc...) asparagine glycosylation sites follow: N109 and N153. A substrate-binding site is contributed by 293 to 295 (HLR). N405 and N465 each carry an N-linked (GlcNAc...) asparagine glycan. Residues 515–539 (KAKHVNEDDSSEYSEIGNVPISSRS) are disordered.

It belongs to the glycosyltransferase GT106 family. Specifically expressed in the root hair.

Its subcellular location is the membrane. The protein operates within glycan metabolism. This Arabidopsis thaliana (Mouse-ear cress) protein is Protein ROOT HAIR SPECIFIC 17.